Here is a 175-residue protein sequence, read N- to C-terminus: Ribosome maturation factor RimM (175 aa).

Residues 95-175 (SEDEFYWREL…RIEVDWDPGF (81 aa)) form the PRC barrel domain.

This sequence belongs to the RimM family. In terms of assembly, binds ribosomal protein uS19.

It is found in the cytoplasm. An accessory protein needed during the final step in the assembly of 30S ribosomal subunit, possibly for assembly of the head region. Essential for efficient processing of 16S rRNA. May be needed both before and after RbfA during the maturation of 16S rRNA. It has affinity for free ribosomal 30S subunits but not for 70S ribosomes. The protein is Ribosome maturation factor RimM of Aliivibrio fischeri (strain MJ11) (Vibrio fischeri).